Here is an 865-residue protein sequence, read N- to C-terminus: Taste receptor type 1 member 3 (865 aa).

Positions 1-24 are cleaved as a signal peptide; it reads MPGLALLGLTALLGLTALLDHGEG. Residues 25–573 are Extracellular-facing; the sequence is ATSCLSQQLR…FLAWGEPAVL (549 aa). N-linked (GlcNAc...) asparagine glycosylation is found at N134 and N267. The chain crosses the membrane as a helical span at residues 574–594; sequence LLLALLALALGLALAALGLFL. The Cytoplasmic portion of the chain corresponds to 595–606; that stretch reads WHSDSPLVQASG. The chain crosses the membrane as a helical span at residues 607–627; sequence GPRACFGLACLGLVCLSVLLF. The Extracellular segment spans residues 628 to 642; sequence PGQPGPASCLAQQPL. Residues 643-663 traverse the membrane as a helical segment; that stretch reads FHLPLTGCLSTFFLQAAEIFV. At 664–685 the chain is on the cytoplasmic side; that stretch reads GSELPPSWAEKMRGRLRGPWAW. Residues 686-706 form a helical membrane-spanning segment; sequence LVVLLAMLAEAALCAWYLVAF. Residues 707–732 are Extracellular-facing; that stretch reads PPEVVTDWRVLPTEALVHCHVHSWIS. A helical membrane pass occupies residues 733–753; it reads FGLVHATNAMLAFLCFLGTFL. Residues 754 to 765 lie on the Cytoplasmic side of the membrane; the sequence is VQSRPGRYNGAR. A helical membrane pass occupies residues 766–786; the sequence is GLTFAMLAYFITWISFVPLFA. The Extracellular segment spans residues 787-794; it reads NVHVAYQP. A helical transmembrane segment spans residues 795-815; it reads AVQMGTILLCALGILATFHLP. The Cytoplasmic segment spans residues 816 to 865; it reads KCYLLLQRPELNTPEFFLEDNARAQGSSWGQGRGESGQKQVTPDPVTSPQ. The segment at 840-865 is disordered; that stretch reads QGSSWGQGRGESGQKQVTPDPVTSPQ. The span at 852 to 865 shows a compositional bias: polar residues; the sequence is GQKQVTPDPVTSPQ.

The protein belongs to the G-protein coupled receptor 3 family. TAS1R subfamily. In terms of assembly, forms homodimers or a heterodimer with TAS1R1. As to expression, expressed in taste buds.

Its subcellular location is the cell membrane. In terms of biological role, putative taste receptor. TAS1R1/TAS1R3 responds to the umami taste stimulus (the taste of monosodium glutamate). This Felis catus (Cat) protein is Taste receptor type 1 member 3 (TAS1R3).